The chain runs to 116 residues: Protein RALF-like 33 (116 aa).

The first 23 residues, 1 to 23 (MRGLSTKPVAIIIAILTVHFLFA), serve as a signal peptide directing secretion. The propeptide at 24–67 (AVTSQSSGDFVPIESKCNGTIAECSLSTAEEEFEMDSEINRRIL) is removed in mature form. N-linked (GlcNAc...) asparagine glycosylation is present at Asn41. 2 disulfide bridges follow: Cys85-Cys95 and Cys108-Cys114.

This sequence belongs to the plant rapid alkalinization factor (RALF) family. Proteolytically cleaved, probably by S1P, a subtilisin-like serine protease (subtilase). Expressed in roots, stems, leaves and plants.

The protein localises to the secreted. In terms of biological role, cell signaling peptide that may regulate plant stress, growth, and development. Mediates a rapid alkalinization of extracellular space by mediating a transient increase in the cytoplasmic Ca(2+) concentration leading to a calcium-dependent signaling events through a cell surface receptor and a concomitant activation of some intracellular mitogen-activated protein kinases. This chain is Protein RALF-like 33 (RALFL33), found in Arabidopsis thaliana (Mouse-ear cress).